A 152-amino-acid polypeptide reads, in one-letter code: Smith-Magenis syndrome chromosomal region candidate gene 5 protein homolog (152 aa).

Positions 41 to 77 (TPCAGPSSQAPPQPPQASPPAAPDHSRTPSLLASSHS) are disordered. A compositionally biased stretch (pro residues) spans 49–62 (QAPPQPPQASPPAA).

This Macaca fascicularis (Crab-eating macaque) protein is Smith-Magenis syndrome chromosomal region candidate gene 5 protein homolog (SMCR5).